The sequence spans 460 residues: tRNA modification GTPase MnmE (460 aa).

3 residues coordinate (6S)-5-formyl-5,6,7,8-tetrahydrofolate: arginine 24, glutamate 81, and lysine 121. The 168-residue stretch at 218–385 (GMVVAIAGPP…LIAAIEDFAA (168 aa)) folds into the TrmE-type G domain. Residues 228–233 (NVGKST), 247–253 (SPHAGTT), and 272–275 (DTAG) each bind GTP. Mg(2+) contacts are provided by serine 232 and threonine 253. (6S)-5-formyl-5,6,7,8-tetrahydrofolate is bound at residue lysine 460.

Belongs to the TRAFAC class TrmE-Era-EngA-EngB-Septin-like GTPase superfamily. TrmE GTPase family. Homodimer. Heterotetramer of two MnmE and two MnmG subunits. The cofactor is K(+).

It is found in the cytoplasm. In terms of biological role, exhibits a very high intrinsic GTPase hydrolysis rate. Involved in the addition of a carboxymethylaminomethyl (cmnm) group at the wobble position (U34) of certain tRNAs, forming tRNA-cmnm(5)s(2)U34. In Rhodopseudomonas palustris (strain BisB5), this protein is tRNA modification GTPase MnmE.